The primary structure comprises 261 residues: uncharacterized protein (261 aa).

A signal peptide spans 1–20 (MKIQVMLIIIFVGIFTICLA). N22 and N27 each carry an N-linked (GlcNAc...) asparagine; by host glycan.

It localises to the secreted. This is an uncharacterized protein from Acanthamoeba polyphaga (Amoeba).